A 246-amino-acid polypeptide reads, in one-letter code: Large ribosomal subunit protein uL3 (246 aa).

The segment at 140–162 (SHRSIGSTGGRQDPGKTFKNKKM) is disordered. N5-methylglutamine is present on Gln-151.

The protein belongs to the universal ribosomal protein uL3 family. Part of the 50S ribosomal subunit. Forms a cluster with proteins L14 and L19. In terms of processing, methylated by PrmB.

Its function is as follows. One of the primary rRNA binding proteins, it binds directly near the 3'-end of the 23S rRNA, where it nucleates assembly of the 50S subunit. This is Large ribosomal subunit protein uL3 from Methylobacterium sp. (strain 4-46).